Reading from the N-terminus, the 956-residue chain is Nitrogen regulatory protein NUT1 (956 aa).

Over residues 1 to 12 (MNPTITEHDFRF) the composition is skewed to basic and acidic residues. Disordered stretches follow at residues 1-51 (MNPT…NDAQ), 120-222 (QQEE…PAAA), 240-262 (KTSIDDRKTTRKRPRGCSPFQVP), 348-373 (GQSITNSLANPDLYSPPGSAYQSQVS), and 524-661 (TLPG…DAPT). Residues 15-37 (RPAAPGRDPGSDSSDDPLPASLR) are compositionally biased toward low complexity. Polar residues-rich tracts occupy residues 42 to 51 (DRQSAFNDAQ), 131 to 153 (PLKTNAPSGIAQQLRQTPTQKKS), 167 to 194 (SHGSATSGLASSSPEAGKPDSTSTNAIS), and 208 to 217 (AAQSQFNPQS). Residues 588–613 (NASTTAIPNSQMQYEQQGVQGHTNSP) show a composition bias toward polar residues. Low complexity-rich tracts occupy residues 623 to 633 (SGFSSVVHSRP) and 640 to 661 (SKNGSTTNLQQQGNNQGGDAPT). The GATA-type zinc-finger motif lies at 663–687 (CTNCATQTTPLWRRNPEGQPLCNAC). A disordered region spans residues 708 to 890 (KKRNRGSGSN…AATRPSGFGT (183 aa)). The span at 713-760 (GSGSNVPGATSGSRSKKGATSTAVSGTNTRKNSSLAISRTASTTNVQV) shows a compositional bias: polar residues. The span at 812 to 839 (VVPIAAAPPKNMPGPGAAAAARTVALGP) shows a compositional bias: low complexity. Composition is skewed to polar residues over residues 849–863 (SPANASLIGMNNANH) and 872–881 (PENSTGSNEA).

Its subcellular location is the nucleus. Functionally, major nitrogen regulatory protein; activates expression of nitrogen-regulated genes. In Pyricularia oryzae (strain 70-15 / ATCC MYA-4617 / FGSC 8958) (Rice blast fungus), this protein is Nitrogen regulatory protein NUT1 (NUT1).